The sequence spans 138 residues: Gas vesicle protein A (138 aa).

Positions 74–138 (EAGPRKDPGL…STSRKKEEQE (65 aa)) are disordered. A compositionally biased stretch (low complexity) spans 116 to 129 (GSSSGSSSGSSSRS).

The protein belongs to the gas vesicle GvpA family. As to quaternary structure, the gas vesicle shell is 2 nm thick and consists of a single layer of this protein. It forms helical ribs nearly perpendicular to the long axis of the vesicle.

The protein resides in the gas vesicle shell. Its function is as follows. Gas vesicles are hollow, gas filled proteinaceous nanostructures found in some microorganisms. During planktonic growth they allow positioning of the organism at a favorable depth for light or nutrient acquisition. GvpA forms the protein shell. It is not clear what function gas vesicles perform in soil bacteria. The protein is Gas vesicle protein A of Streptomyces sp. (strain CB03234).